Consider the following 337-residue polypeptide: Aspartate carbamoyltransferase catalytic subunit (337 aa).

2 residues coordinate carbamoyl phosphate: R54 and T55. K82 contacts L-aspartate. R104, H134, and Q137 together coordinate carbamoyl phosphate. Residues R177 and R232 each coordinate L-aspartate. Carbamoyl phosphate is bound by residues G277 and P278.

This sequence belongs to the aspartate/ornithine carbamoyltransferase superfamily. ATCase family. As to quaternary structure, heterododecamer (2C3:3R2) of six catalytic PyrB chains organized as two trimers (C3), and six regulatory PyrI chains organized as three dimers (R2).

It carries out the reaction carbamoyl phosphate + L-aspartate = N-carbamoyl-L-aspartate + phosphate + H(+). Its pathway is pyrimidine metabolism; UMP biosynthesis via de novo pathway; (S)-dihydroorotate from bicarbonate: step 2/3. Functionally, catalyzes the condensation of carbamoyl phosphate and aspartate to form carbamoyl aspartate and inorganic phosphate, the committed step in the de novo pyrimidine nucleotide biosynthesis pathway. The chain is Aspartate carbamoyltransferase catalytic subunit from Arthrobacter sp. (strain FB24).